Consider the following 327-residue polypeptide: tRNA-dihydrouridine(20/20a) synthase (327 aa).

FMN-binding positions include 17-19 (PML) and Q69. The Proton donor role is filled by C99. Residues K138, H170, 210 to 212 (NGG), and 232 to 233 (GR) each bind FMN.

It belongs to the Dus family. DusA subfamily. FMN serves as cofactor.

It catalyses the reaction 5,6-dihydrouridine(20) in tRNA + NADP(+) = uridine(20) in tRNA + NADPH + H(+). The catalysed reaction is 5,6-dihydrouridine(20) in tRNA + NAD(+) = uridine(20) in tRNA + NADH + H(+). It carries out the reaction 5,6-dihydrouridine(20a) in tRNA + NADP(+) = uridine(20a) in tRNA + NADPH + H(+). The enzyme catalyses 5,6-dihydrouridine(20a) in tRNA + NAD(+) = uridine(20a) in tRNA + NADH + H(+). In terms of biological role, catalyzes the synthesis of 5,6-dihydrouridine (D), a modified base found in the D-loop of most tRNAs, via the reduction of the C5-C6 double bond in target uridines. Specifically modifies U20 and U20a in tRNAs. This Pasteurella multocida (strain Pm70) protein is tRNA-dihydrouridine(20/20a) synthase.